A 676-amino-acid polypeptide reads, in one-letter code: Nicastrin (676 aa).

The N-terminal stretch at 1–28 is a signal peptide; that stretch reads MAMGLIRLLSIAFTLVLLSILPLHLSLA. Residues 29–644 lie on the Extracellular side of the membrane; it reads DEITSIESVP…VYTVQHSAYD (616 aa). N-linked (GlcNAc...) asparagine glycans are attached at residues Asn-58, Asn-336, Asn-371, Asn-444, Asn-480, Asn-555, and Asn-611. Residues 645–665 form a helical membrane-spanning segment; sequence NAVLVAGITVTTLAYIGILAA. Topologically, residues 666–676 are cytoplasmic; sequence KSIITKALKQD.

Belongs to the nicastrin family. In terms of assembly, probable component of the gamma-secretase complex, a complex composed of a presenilin homodimer, nicastrin, APH1 and PEN2.

Its subcellular location is the membrane. Its function is as follows. Probable subunit of the gamma-secretase complex, an endoprotease complex that catalyzes the intramembrane cleavage of integral membrane proteins such as Notch. This chain is Nicastrin, found in Arabidopsis thaliana (Mouse-ear cress).